Reading from the N-terminus, the 508-residue chain is Methionine--tRNA ligase (508 aa).

The 'HIGH' region signature appears at 12–22 (YYVNDIPHIGH). Residues 295 to 299 (KISKS) carry the 'KMSKS' region motif. Lys-298 serves as a coordination point for ATP.

Belongs to the class-I aminoacyl-tRNA synthetase family. MetG type 2B subfamily. In terms of assembly, monomer.

Its subcellular location is the cytoplasm. The catalysed reaction is tRNA(Met) + L-methionine + ATP = L-methionyl-tRNA(Met) + AMP + diphosphate. In terms of biological role, is required not only for elongation of protein synthesis but also for the initiation of all mRNA translation through initiator tRNA(fMet) aminoacylation. The sequence is that of Methionine--tRNA ligase from Rickettsia conorii (strain ATCC VR-613 / Malish 7).